A 457-amino-acid chain; its full sequence is Biphenyl dioxygenase subunit alpha (457 aa).

The 117-residue stretch at 58 to 174 folds into the Rieske domain; sequence WLMLGHETHI…VETYKGLVFA (117 aa). Cys100, His102, Cys120, and His123 together coordinate [2Fe-2S] cluster. The Fe cation site is built by His233 and His239.

The protein belongs to the bacterial ring-hydroxylating dioxygenase alpha subunit family. As to quaternary structure, heterohexamer consisting of three BphA subunits and three BphE subunits. A ferredoxin (BphF) and a ferredoxin reductase (BphG) must be present to obtain activity. Requires [2Fe-2S] cluster as cofactor. It depends on Fe cation as a cofactor.

It carries out the reaction biphenyl + NADH + O2 + H(+) = (2R,3S)-3-phenylcyclohexa-3,5-diene-1,2-diol + NAD(+). It participates in xenobiotic degradation; biphenyl degradation; 2-hydroxy-2,4-pentadienoate and benzoate from biphenyl: step 1/4. This Comamonas testosteroni (Pseudomonas testosteroni) protein is Biphenyl dioxygenase subunit alpha (bphA).